A 359-amino-acid chain; its full sequence is Small ribosomal subunit protein mS22 (359 aa).

Belongs to the mitochondrion-specific ribosomal protein mS22 family. As to quaternary structure, component of the mitochondrial ribosome small subunit (28S) which comprises a 12S rRNA and about 30 distinct proteins.

Its subcellular location is the mitochondrion. This chain is Small ribosomal subunit protein mS22 (MRPS22), found in Bos taurus (Bovine).